We begin with the raw amino-acid sequence, 449 residues long: Alpha-L-fucosidase (449 aa).

The first 19 residues, 1-19 (MGLLLLLSLLSACFQPRYA), serve as a signal peptide directing secretion. Residues Asn156, Asn224, Asn362, and Asn375 are each glycosylated (N-linked (GlcNAc...) asparagine).

Belongs to the glycosyl hydrolase 29 family. In terms of assembly, homotetramer.

The protein localises to the secreted. The catalysed reaction is an alpha-L-fucoside + H2O = L-fucose + an alcohol. Functionally, alpha-L-fucosidase is responsible for hydrolyzing the alpha-1,6-linked fucose joined to the reducing-end N-acetylglucosamine of the carbohydrate moieties of glycoproteins. The polypeptide is Alpha-L-fucosidase (Branchiostoma floridae (Florida lancelet)).